The following is a 439-amino-acid chain: Hydroxyornithine transacylase SID3 (439 aa).

Positions 437–439 match the PTS1-type peroxisomal targeting signal motif; it reads SKL.

Belongs to the lysine N-acyltransferase mbtK family.

It localises to the peroxisome. Its pathway is siderophore biosynthesis. Hydroxyornithine transacylase; part of the gene cluster that mediates the biosynthesis of hydroxamate-containing siderophores that play a critical role in virulence via intracellular iron acquisition during macrophage infection. The polypeptide is Hydroxyornithine transacylase SID3 (Ajellomyces capsulatus (Darling's disease fungus)).